The sequence spans 1255 residues: Cilia- and flagella-associated protein 337 B (1255 aa).

Positions 87-122 (KLVRCLTNLFEEIDLNGNGILEWDEFTNYVIEKATV) constitute an EF-hand domain. Ca(2+) is bound by residues D100, N102, N104, and E111. 12 WD repeats span residues 228–269 (DLKT…WVLA), 282–322 (EFKN…KELE), 326–365 (AHTE…KKRV), 368–407 (EHTR…LIYK), 410–449 (GHSS…NVQC), 496–536 (VDDY…KIFS), 538–577 (VTQG…MIKA), 580–624 (KHSA…RTLE), 625–664 (LKDV…QNGS), 669–708 (TQYE…FKFQ), 769–808 (QQNL…TILE), and 844–883 (AHYE…LIDQ). Disordered stretches follow at residues 941–988 (IKSL…NFNP) and 1140–1160 (QQQV…QQPG). Low complexity predominate over residues 953 to 969 (TQESSTQEQEAAQQPQQ). Over residues 1148–1160 (TEPSSNRSHQQPG) the composition is skewed to polar residues.

It belongs to the CFAP337 family. In terms of assembly, associates with components of the nexin-dynein regulatory complex (N-DRC) and the CFAP184:CFAP263 complex.

The protein resides in the cell projection. It localises to the cilium. In terms of biological role, associates with components of the nexin-dynein regulatory complex (N-DRC), a key regulator of ciliary/flagellar motility, and might act as an inner dynein arm (IDA) hub or linkage. This is Cilia- and flagella-associated protein 337 B from Tetrahymena thermophila (strain SB210).